Here is a 200-residue protein sequence, read N- to C-terminus: NADH-quinone oxidoreductase subunit C (200 aa).

The protein belongs to the complex I 30 kDa subunit family. NDH-1 is composed of 14 different subunits. Subunits NuoB, C, D, E, F, and G constitute the peripheral sector of the complex.

Its subcellular location is the cell inner membrane. It carries out the reaction a quinone + NADH + 5 H(+)(in) = a quinol + NAD(+) + 4 H(+)(out). Its function is as follows. NDH-1 shuttles electrons from NADH, via FMN and iron-sulfur (Fe-S) centers, to quinones in the respiratory chain. The immediate electron acceptor for the enzyme in this species is believed to be ubiquinone. Couples the redox reaction to proton translocation (for every two electrons transferred, four hydrogen ions are translocated across the cytoplasmic membrane), and thus conserves the redox energy in a proton gradient. The protein is NADH-quinone oxidoreductase subunit C of Burkholderia multivorans (strain ATCC 17616 / 249).